A 542-amino-acid chain; its full sequence is uncharacterized protein (542 aa).

Helical transmembrane passes span 4–23, 28–47, 57–79, 86–108, and 151–173; these read ILRDNPLLLLFIVAGIGYPL, IGGIHLGVAAVLFVGLAFGA, IVYQFGLALFVYCVGLSSGHGFL, GVIYNLLTLGVILLAAALLLIPH, and PVVGYSIAYPASVLGVILAIYLA. RCK C-terminal domains lie at 186-270 and 273-356; these read RTLK…VIGC and EVQA…LGDS. 6 consecutive transmembrane segments (helical) span residues 365 to 384, 389 to 408, 415 to 437, 457 to 479, 484 to 506, and 519 to 541; these read IAVLGLGMALGIGLGLVPIP, ITVRLGLAGGPLIVALFLGA, LVWVLPYSANMLLRQMGLTIFLA, WAILGASAAIIVLLSWVMLYVGY, IPMGLLTGMVAGMQTQSATLGFA, and YAMVYPMAMVVKIVLAPVIIAVL.

This sequence belongs to the AAE transporter (TC 2.A.81) family.

The protein localises to the cell membrane. This is an uncharacterized protein from Symbiobacterium thermophilum (strain DSM 24528 / JCM 14929 / IAM 14863 / T).